Reading from the N-terminus, the 288-residue chain is tRNA dimethylallyltransferase (288 aa).

2 to 9 serves as a coordination point for ATP; the sequence is GPTAAGKS. 4–9 provides a ligand contact to substrate; the sequence is TAAGKS. The interval 27 to 30 is interaction with substrate tRNA; the sequence is DSMQ.

The protein belongs to the IPP transferase family. As to quaternary structure, monomer. Mg(2+) is required as a cofactor.

The catalysed reaction is adenosine(37) in tRNA + dimethylallyl diphosphate = N(6)-dimethylallyladenosine(37) in tRNA + diphosphate. Catalyzes the transfer of a dimethylallyl group onto the adenine at position 37 in tRNAs that read codons beginning with uridine, leading to the formation of N6-(dimethylallyl)adenosine (i(6)A). This Frankia alni (strain DSM 45986 / CECT 9034 / ACN14a) protein is tRNA dimethylallyltransferase.